The following is a 141-amino-acid chain: Endoribonuclease YbeY (141 aa).

Residues histidine 107, histidine 111, and histidine 117 each contribute to the Zn(2+) site.

This sequence belongs to the endoribonuclease YbeY family. The cofactor is Zn(2+).

The protein resides in the cytoplasm. Its function is as follows. Single strand-specific metallo-endoribonuclease involved in late-stage 70S ribosome quality control and in maturation of the 3' terminus of the 16S rRNA. The polypeptide is Endoribonuclease YbeY (Leptospira interrogans serogroup Icterohaemorrhagiae serovar Lai (strain 56601)).